Consider the following 457-residue polypeptide: MTVTVRFAPSPTGYIHIGNTRTALSNWLYASKNNGKFILRYDDTDVERSKDEYAQAIAVDLDWLGVRPDRVEYQSKRFDIYAKAVEKLKTAGLLYACYETADELERRRKLRLARRLPPVYGREALKLTDAEKAALEAEGRKPHWRFLLPNFESDPFATQRTEVHWDDLVRGPQTVDLASMSDPILVREDGTYLYTLPSVVDDIDMGVTHIIRGDDHVTNTGVQISIFKALGATPPVFGHHNLLTTISGEGLSKRTGALSVGSLREAGYEPMAVASLAILIGTSESVTAAPDMAALAEHFDLASISKSSAKFDPSELDALNRSLLHEMPFEKAKPRLEALGICGAKAESFWLAVRGNLDRFSDVSHWWQVVSGDLPEAPDLSGEDRDFVRHAFDLLPPEPWNGQTWKSWTEAVKSATGRKGKNLFMPLRLALTGQAHGPELADLLVLVGLERTKSRRP.

The short motif at 9–19 (PSPTGYIHIGN) is the 'HIGH' region element. Positions 250–254 (GLSKR) match the 'KMSKS' region motif. Lysine 253 contributes to the ATP binding site.

This sequence belongs to the class-I aminoacyl-tRNA synthetase family. Glutamate--tRNA ligase type 1 subfamily. Monomer.

It localises to the cytoplasm. The enzyme catalyses tRNA(Glu) + L-glutamate + ATP = L-glutamyl-tRNA(Glu) + AMP + diphosphate. Catalyzes the attachment of glutamate to tRNA(Glu) in a two-step reaction: glutamate is first activated by ATP to form Glu-AMP and then transferred to the acceptor end of tRNA(Glu). The polypeptide is Glutamate--tRNA ligase 1 (Brucella ovis (strain ATCC 25840 / 63/290 / NCTC 10512)).